The primary structure comprises 178 residues: ATP synthase subunit delta (178 aa).

This sequence belongs to the ATPase delta chain family. In terms of assembly, F-type ATPases have 2 components, F(1) - the catalytic core - and F(0) - the membrane proton channel. F(1) has five subunits: alpha(3), beta(3), gamma(1), delta(1), epsilon(1). F(0) has three main subunits: a(1), b(2) and c(10-14). The alpha and beta chains form an alternating ring which encloses part of the gamma chain. F(1) is attached to F(0) by a central stalk formed by the gamma and epsilon chains, while a peripheral stalk is formed by the delta and b chains.

It is found in the cell inner membrane. F(1)F(0) ATP synthase produces ATP from ADP in the presence of a proton or sodium gradient. F-type ATPases consist of two structural domains, F(1) containing the extramembraneous catalytic core and F(0) containing the membrane proton channel, linked together by a central stalk and a peripheral stalk. During catalysis, ATP synthesis in the catalytic domain of F(1) is coupled via a rotary mechanism of the central stalk subunits to proton translocation. Its function is as follows. This protein is part of the stalk that links CF(0) to CF(1). It either transmits conformational changes from CF(0) to CF(1) or is implicated in proton conduction. The sequence is that of ATP synthase subunit delta from Methylococcus capsulatus (strain ATCC 33009 / NCIMB 11132 / Bath).